A 520-amino-acid chain; its full sequence is MRYGTLGEEINTTEVTDEFETLQTIKRTKQNIVGWYFYSFSSEPFVVSAIATYIPLLLEQFARHNGVTLEDHSVHCTADHDKCVLGLFSNRIYIDTSSFALYTFSVSVFFQTLVVITVSGVVDIWNTVTFKRNVLLLFGIIGALSTILISRIYNTQYYMLAFLCILSNSCYGVVNVVGNSLLPLFVSEYLQHNSSSLDERDNVDILTTLISGRGASIGYSSALVVQIISIFLIKKSKSSENIQVATLFVGIWWLIWQLPMSWLLQDSPISADVTPEDMDNLSIHKPKKWIFKFSNLKHGWSSLFQALKHAKLLKDVVIFLVGWFIVSDSVTTINSTAILFAKTELKMSTLSLIVLSILTMINAILGAFTIPQFISRKFQLPGEKLLIYIILWASFIPFYGILGFVFKNIGLKHKFEMFITAIWYGISLGGLSAVSRSVFSLIIPRGQESTFFSIFNVTDKGSSILGPLLIGLITDYTHDIRYSFFLLFALLILAIPIFHLLDVERGKKEASSLQKIPIAD.

An N-linked (GlcNAc...) asparagine glycan is attached at Asn11. The next 4 membrane-spanning stretches (helical) occupy residues 32–52 (IVGWYFYSFSSEPFVVSAIAT), 104–124 (FSVSVFFQTLVVITVSGVVDI), 133–153 (NVLLLFGIIGALSTILISRIY), and 158–178 (YMLAFLCILSNSCYGVVNVVG). Asn193 carries an N-linked (GlcNAc...) asparagine glycan. Transmembrane regions (helical) follow at residues 214–234 (GASIGYSSALVVQIISIFLIK) and 244–264 (VATLFVGIWWLIWQLPMSWLL). Asn280 carries N-linked (GlcNAc...) asparagine glycosylation. Helical transmembrane passes span 316 to 336 (VVIFLVGWFIVSDSVTTINST), 350 to 370 (LSLIVLSILTMINAILGAFTI), 386 to 406 (LIYIILWASFIPFYGILGFVF), 415 to 435 (FEMFITAIWYGISLGGLSAVS), 454 to 474 (IFNVTDKGSSILGPLLIGLIT), and 483 to 503 (SFFLLFALLILAIPIFHLLDV).

This sequence belongs to the ATG22 family.

It is found in the vacuole membrane. Its function is as follows. Vacuolar effluxer which mediate the efflux of amino acids resulting from autophagic degradation. The release of autophagic amino acids allows the maintenance of protein synthesis and viability during nitrogen starvation. This chain is Autophagy-related protein 22 (ATG22), found in Vanderwaltozyma polyspora (strain ATCC 22028 / DSM 70294 / BCRC 21397 / CBS 2163 / NBRC 10782 / NRRL Y-8283 / UCD 57-17) (Kluyveromyces polysporus).